We begin with the raw amino-acid sequence, 102 residues long: Large ribosomal subunit protein uL23c (102 aa).

It belongs to the universal ribosomal protein uL23 family. As to quaternary structure, part of the 50S ribosomal subunit.

The protein localises to the plastid. Its subcellular location is the chloroplast. In terms of biological role, binds to 23S rRNA. This Phaeodactylum tricornutum (strain CCAP 1055/1) protein is Large ribosomal subunit protein uL23c (rpl23).